A 409-amino-acid polypeptide reads, in one-letter code: MKNMVQRFLKYVTIDTKSDHESESFPSTKSQFDLAKLLVEELKALGLEDAVMDENCYVMATLPSNCNTDKTIPTIGFIAHMDTSPDMSGKDVKPQMVENYDGQDIVLNQEKNIILSPTDFPDLKNYVGKTLITTDGTTLLGADNKAGIAEIISALEYLVQNPEVQHGTIKVAFTPDEEVGHGADRFDVEKFGADFAYTIDGGEIGELEYENFNAAGVKILVHGRNIHPGTAKNRMVNSMEIAMELHAMLPENQKPQYTEGYEGFFLLTGIRGDVEETKCGYIIRDHCKNKFEEKKSLIKNAVDFLNGKYGEGTINLTVTDNYFNMKEKIEPVMHIVETARTAMEEVGVTPIIKPIRGGTDGARLSFMGLPCPNIFTGGHNFHGKYEYICVESMYKATEVILKIIELYSK.

Residue histidine 80 coordinates Zn(2+). Aspartate 82 is a catalytic residue. Aspartate 143 serves as a coordination point for Zn(2+). Residue glutamate 177 is the Proton acceptor of the active site. The Zn(2+) site is built by glutamate 178, aspartate 200, and histidine 382.

This sequence belongs to the peptidase M20B family. Requires Zn(2+) as cofactor.

The protein localises to the cytoplasm. It carries out the reaction Release of the N-terminal residue from a tripeptide.. Functionally, cleaves the N-terminal amino acid of tripeptides. The protein is Peptidase T of Alkaliphilus oremlandii (strain OhILAs) (Clostridium oremlandii (strain OhILAs)).